Consider the following 314-residue polypeptide: DegV domain-containing protein XCC3382 (314 aa).

The 305-residue stretch at 3-307 (IGIVVDSACD…KGALAVAFAA (305 aa)) folds into the DegV domain. T63 and S96 together coordinate hexadecanoate.

In terms of biological role, may bind long-chain fatty acids, such as palmitate, and may play a role in lipid transport or fatty acid metabolism. The protein is DegV domain-containing protein XCC3382 of Xanthomonas campestris pv. campestris (strain ATCC 33913 / DSM 3586 / NCPPB 528 / LMG 568 / P 25).